The primary structure comprises 426 residues: COMPASS component SWD1 (426 aa).

WD repeat units lie at residues 24 to 63 (ENPL…PICV), 70 to 109 (AHVR…KPLK), 212 to 251 (ITSS…ENSA), 264 to 307 (INKL…LVRV), and 310 to 350 (GAEE…KWSA). Residues Arg-236 and Lys-266 each contribute to the DNA site.

As to quaternary structure, component of the Set1C/COMPASS complex which consists of SET1(2), BRE2(2), SPP1(2), SDC1(1), SHG1(1), SWD1(1), SWD2(1), and SWD3(1).

The protein resides in the nucleus. It localises to the chromosome. The protein localises to the telomere. In terms of biological role, component of the Set1C/COMPASS complex that specifically mono-, di- and trimethylates histone H3 to form H3K4me1/2/3, which subsequently plays a role in telomere length maintenance and transcription elongation regulation. COMPASS recognizes ubiquitinated H2B on one face of the nucleosome which stimulates the methylation of H3 on the opposing face. SWD1/CPS50 acts as an assembly and regulatory hub for COMPASS complex formation. Serves as a highly utilized surface for COMPASS interaction with the nucleosome. The protein is COMPASS component SWD1 of Saccharomyces cerevisiae (strain ATCC 204508 / S288c) (Baker's yeast).